The chain runs to 793 residues: Wall-associated receptor kinase-like 18 (793 aa).

Positions 1-28 are cleaved as a signal peptide; that stretch reads MSNESTNCSFFLNLFMLLLLLIFYSADA. The Extracellular segment spans residues 29–378; it reads CQRECGGISI…YRCVRDKTKA (350 aa). Asn-60, Asn-130, Asn-170, Asn-238, Asn-285, and Asn-304 each carry an N-linked (GlcNAc...) asparagine glycan. The interval 312-371 is atypical EGF-like; it reads CTCGRITISETSYANCGCTYGYTGNPYVLNGCKDIDECKVKFEYCGKTETCVNFEGGYRC. Disulfide bonds link Cys-314/Cys-327, Cys-349/Cys-362, and Cys-356/Cys-371. A helical transmembrane segment spans residues 379–399; that stretch reads IMIGAGTGFGVLVLVGGLWWL. Residues 400 to 793 are Cytoplasmic-facing; that stretch reads RKFLIKRRIT…VEPLFPRLTW (394 aa). The Protein kinase domain maps to 453–728; it reads FSENRVLGHG…REVFTELERI (276 aa). Residues 459-467 and Lys-481 each bind ATP; that span reads LGHGGQGTV. A Phosphotyrosine modification is found at Tyr-526. Asp-579 serves as the catalytic Proton acceptor. 2 positions are modified to phosphothreonine: Thr-613 and Thr-618. A Phosphotyrosine modification is found at Tyr-626. A disordered region spans residues 733 to 757; it reads EDSQVHNRIDEEEEEEEEEEEVVTT. The span at 742-754 shows a compositional bias: acidic residues; the sequence is DEEEEEEEEEEEV.

This sequence belongs to the protein kinase superfamily. Ser/Thr protein kinase family.

The protein localises to the membrane. It catalyses the reaction L-seryl-[protein] + ATP = O-phospho-L-seryl-[protein] + ADP + H(+). The catalysed reaction is L-threonyl-[protein] + ATP = O-phospho-L-threonyl-[protein] + ADP + H(+). In terms of biological role, serine/threonine-protein kinase that may function as a signaling receptor of extracellular matrix component. This chain is Wall-associated receptor kinase-like 18 (WAKL18), found in Arabidopsis thaliana (Mouse-ear cress).